The following is a 374-amino-acid chain: S-adenosylmethionine:tRNA ribosyltransferase-isomerase (374 aa).

It belongs to the QueA family. As to quaternary structure, monomer.

The protein localises to the cytoplasm. The enzyme catalyses 7-aminomethyl-7-carbaguanosine(34) in tRNA + S-adenosyl-L-methionine = epoxyqueuosine(34) in tRNA + adenine + L-methionine + 2 H(+). The protein operates within tRNA modification; tRNA-queuosine biosynthesis. Transfers and isomerizes the ribose moiety from AdoMet to the 7-aminomethyl group of 7-deazaguanine (preQ1-tRNA) to give epoxyqueuosine (oQ-tRNA). The protein is S-adenosylmethionine:tRNA ribosyltransferase-isomerase of Prochlorococcus marinus (strain MIT 9301).